A 105-amino-acid polypeptide reads, in one-letter code: Antitoxin YfjZ (105 aa).

This sequence belongs to the CbeA/YafW/YfjZ antitoxin family.

Antitoxin component of a type IV toxin-antitoxin (TA) system. Antitoxin that counteracts the effect of cognate toxin YpjF. Also counteracts the effect of non-cognate toxins CbtA and YfkI. This Escherichia coli (strain K12) protein is Antitoxin YfjZ (yfjZ).